The following is a 391-amino-acid chain: Solute carrier family 35 member F2 (391 aa).

The next 10 helical transmembrane spans lie at 39 to 59 (MLLS…IRLT), 73 to 93 (LFQS…TLAV), 108 to 128 (WWKY…VVKA), 137 to 157 (IQLL…FFLL), 165 to 185 (FIGA…DVLM), 200 to 220 (LIGD…SVCQ), 230 to 250 (VELL…QLAI), 267 to 287 (LLYV…PVVI), 294 to 314 (AINL…LFLF), and 318 to 338 (FSGL…FYFS). The interval 361–391 (VELPSSGQLEPSVTYTSLSQETEEEPRVRVA) is disordered. Over residues 365–380 (SSGQLEPSVTYTSLSQ) the composition is skewed to polar residues.

This sequence belongs to the SLC35F solute transporter family.

The protein resides in the membrane. Putative solute transporter. This chain is Solute carrier family 35 member F2 (slc35f2), found in Xenopus tropicalis (Western clawed frog).